Here is a 91-residue protein sequence, read N- to C-terminus: Acylphosphatase (91 aa).

Positions 5–91 (CLHAYVGGRV…QGIAGFVVRR (87 aa)) constitute an Acylphosphatase-like domain. Catalysis depends on residues Arg20 and Asn38.

Belongs to the acylphosphatase family.

The catalysed reaction is an acyl phosphate + H2O = a carboxylate + phosphate + H(+). This is Acylphosphatase (acyP) from Pseudomonas aeruginosa (strain ATCC 15692 / DSM 22644 / CIP 104116 / JCM 14847 / LMG 12228 / 1C / PRS 101 / PAO1).